The primary structure comprises 308 residues: Transaldolase (308 aa).

Catalysis depends on Lys-125, which acts as the Schiff-base intermediate with substrate.

It belongs to the transaldolase family. Type 1 subfamily. In terms of assembly, homodimer.

Its subcellular location is the cytoplasm. The enzyme catalyses D-sedoheptulose 7-phosphate + D-glyceraldehyde 3-phosphate = D-erythrose 4-phosphate + beta-D-fructose 6-phosphate. The protein operates within carbohydrate degradation; pentose phosphate pathway; D-glyceraldehyde 3-phosphate and beta-D-fructose 6-phosphate from D-ribose 5-phosphate and D-xylulose 5-phosphate (non-oxidative stage): step 2/3. Functionally, transaldolase is important for the balance of metabolites in the pentose-phosphate pathway. The sequence is that of Transaldolase from Pseudomonas entomophila (strain L48).